Consider the following 236-residue polypeptide: 5'-methylthioadenosine/S-adenosylhomocysteine nucleosidase (236 aa).

The active-site Proton acceptor is glutamate 12. Substrate is bound by residues glycine 78, isoleucine 153, and 174–175 (ME). The active-site Proton donor is the aspartate 198.

The protein belongs to the PNP/UDP phosphorylase family. MtnN subfamily.

It catalyses the reaction S-adenosyl-L-homocysteine + H2O = S-(5-deoxy-D-ribos-5-yl)-L-homocysteine + adenine. The catalysed reaction is S-methyl-5'-thioadenosine + H2O = 5-(methylsulfanyl)-D-ribose + adenine. The enzyme catalyses 5'-deoxyadenosine + H2O = 5-deoxy-D-ribose + adenine. Its pathway is amino-acid biosynthesis; L-methionine biosynthesis via salvage pathway; S-methyl-5-thio-alpha-D-ribose 1-phosphate from S-methyl-5'-thioadenosine (hydrolase route): step 1/2. Catalyzes the irreversible cleavage of the glycosidic bond in both 5'-methylthioadenosine (MTA) and S-adenosylhomocysteine (SAH/AdoHcy) to adenine and the corresponding thioribose, 5'-methylthioribose and S-ribosylhomocysteine, respectively. Also cleaves 5'-deoxyadenosine, a toxic by-product of radical S-adenosylmethionine (SAM) enzymes, into 5-deoxyribose and adenine. The polypeptide is 5'-methylthioadenosine/S-adenosylhomocysteine nucleosidase (Shewanella baltica (strain OS155 / ATCC BAA-1091)).